Here is a 205-residue protein sequence, read N- to C-terminus: Holliday junction branch migration complex subunit RuvA (205 aa).

Residues 1–63 (MIGMLRGHVE…QDAITLFGFG (63 aa)) form a domain I region. Positions 64-142 (TLASKRMFLQ…LSQIEGSSAT (79 aa)) are domain II. The tract at residues 143–145 (AST) is flexible linker. The interval 146–205 (PEDTGAEQVVEGLMSLGWHQQDAAHAVQTVCADNQIETPLNAKDVPRVLKLALTSLDRGR) is domain III.

It belongs to the RuvA family. In terms of assembly, homotetramer. Forms an RuvA(8)-RuvB(12)-Holliday junction (HJ) complex. HJ DNA is sandwiched between 2 RuvA tetramers; dsDNA enters through RuvA and exits via RuvB. An RuvB hexamer assembles on each DNA strand where it exits the tetramer. Each RuvB hexamer is contacted by two RuvA subunits (via domain III) on 2 adjacent RuvB subunits; this complex drives branch migration. In the full resolvosome a probable DNA-RuvA(4)-RuvB(12)-RuvC(2) complex forms which resolves the HJ.

The protein resides in the cytoplasm. Functionally, the RuvA-RuvB-RuvC complex processes Holliday junction (HJ) DNA during genetic recombination and DNA repair, while the RuvA-RuvB complex plays an important role in the rescue of blocked DNA replication forks via replication fork reversal (RFR). RuvA specifically binds to HJ cruciform DNA, conferring on it an open structure. The RuvB hexamer acts as an ATP-dependent pump, pulling dsDNA into and through the RuvAB complex. HJ branch migration allows RuvC to scan DNA until it finds its consensus sequence, where it cleaves and resolves the cruciform DNA. This chain is Holliday junction branch migration complex subunit RuvA, found in Bifidobacterium adolescentis (strain ATCC 15703 / DSM 20083 / NCTC 11814 / E194a).